Consider the following 432-residue polypeptide: Anaerobic glycerol-3-phosphate dehydrogenase subunit B (432 aa).

Belongs to the anaerobic G-3-P dehydrogenase subunit B family. As to quaternary structure, composed of a catalytic GlpA/B dimer and of membrane bound GlpC. The cofactor is FMN.

It carries out the reaction a quinone + sn-glycerol 3-phosphate = dihydroxyacetone phosphate + a quinol. Its pathway is polyol metabolism; glycerol degradation via glycerol kinase pathway; glycerone phosphate from sn-glycerol 3-phosphate (anaerobic route): step 1/1. In terms of biological role, conversion of glycerol 3-phosphate to dihydroxyacetone. Uses fumarate or nitrate as electron acceptor. The polypeptide is Anaerobic glycerol-3-phosphate dehydrogenase subunit B (glpB) (Haemophilus influenzae (strain ATCC 51907 / DSM 11121 / KW20 / Rd)).